The primary structure comprises 962 residues: Leucine-rich repeat-containing G-protein coupled receptor 6 (962 aa).

The signal sequence occupies residues 1–16 (MLVVLLILHAVSCAHS). Residues 20 to 60 (PGAAVPVKQCPSACQCEEDGILLLVDCSEQGLSSVPTDLSP) enclose the LRRNT domain. LRR repeat units lie at residues 38 to 58 (DGILLLVDCSEQGLSSVPTDL), 59 to 82 (SPLTSYLDLSMNNISEIQPNAFRN), 83 to 106 (LHFLSELRLSGNHLRHIPGPMLQG), 107 to 131 (LYNLKVLMLQNNQLERLPSEDPWEL), 133 to 154 (NLLSLRLDANLIMEVPARTLSG), 155 to 178 (MRSLRHLWLDDNALTEIPVSALND), 179 to 202 (LSSLQAMTLALNRITLIPDYAFRN), 203 to 226 (LSNLVVLHLHNNMIRTLGQNCFEG), 228 to 250 (HSLETLELNFNDLQEFPVAIRTL), 251 to 273 (AKLQELGFHNNNIKAIPERAFVG), 275 to 297 (PLLQTIHFYENPIQFVGRSAFQF), 298 to 321 (LPKLHTLSLNGATEIREFPDLKGT), 322 to 344 (TSLQVLTLTRAGLTSLPYDLCHL), 345 to 368 (LPKLKVLELSHNVIEELPSFYHCT), 370 to 390 (LQEIGLQHNLIKQIEMNTFQQ), 391 to 414 (LGSLRSLDLSWNSINSIHPDAFFS), and 416 to 438 (QSLIKLDLTGNRLSNLPMTGLTS). N-linked (GlcNAc...) asparagine glycosylation occurs at Asn-71. Asn-202 carries an N-linked (GlcNAc...) asparagine glycan. 7 helical membrane passes run 559–579 (GMWLISLVSLMGNSLLILTVF), 590–610 (FIIGTISGANLLTGLCTGTLA), 647–669 (SILFLTLAAVQCSVSVSCARAYG), 679–699 (AAAVACLALSLAVAALPLIGV), 723–743 (FMVALIMMNSLCFLVITGTYI), 766–786 (VAWLIFTNCLLYCPVAFLTFS), and 801–821 (SVVLVLLPLPASINPLLYLLF). The cysteines at positions 633 and 708 are disulfide-linked.

The protein belongs to the G-protein coupled receptor 1 family.

The protein localises to the cell membrane. Its function is as follows. Receptor for R-spondins that potentiates the canonical Wnt signaling pathway. Upon binding to R-spondins (rspo1, rspo2, rspo3 or rspo4), associates with phosphorylated lrp6 and frizzled receptors that are activated by extracellular Wnt receptors, triggering the canonical Wnt signaling pathway to increase expression of target genes. In contrast to classical G-protein coupled receptors, does not activate heterotrimeric G-proteins to transduce the signal. The sequence is that of Leucine-rich repeat-containing G-protein coupled receptor 6 (lgr6) from Danio rerio (Zebrafish).